Reading from the N-terminus, the 486-residue chain is Glycogen synthase (486 aa).

Residue lysine 15 participates in ADP-alpha-D-glucose binding.

The protein belongs to the glycosyltransferase 1 family. Bacterial/plant glycogen synthase subfamily.

The catalysed reaction is [(1-&gt;4)-alpha-D-glucosyl](n) + ADP-alpha-D-glucose = [(1-&gt;4)-alpha-D-glucosyl](n+1) + ADP + H(+). It functions in the pathway glycan biosynthesis; glycogen biosynthesis. Functionally, synthesizes alpha-1,4-glucan chains using ADP-glucose. This chain is Glycogen synthase, found in Thermotoga petrophila (strain ATCC BAA-488 / DSM 13995 / JCM 10881 / RKU-1).